The sequence spans 160 residues: MNSMLNPNAVPFQPSPQVVALPMQYPSGFSSGYRRQRDPAFRPMFRRQNNGNQNRSRQNRQRLQNNNRGNNRNRNQFNRRQNQPSQSMSFEQQLLLMANETAYAATYPSDMQNIAPTKLVKIAKRAAMQIVSGHATVEISNGTEDSNQRVATFTIKVVMN.

The involved in nuclear and nucleolar localization stretch occupies residues Ser-31–Arg-60. The disordered stretch occupies residues Met-44–Met-88. Over residues Arg-46–Gln-83 the composition is skewed to low complexity. Residues Ser-146 to Ile-155 carry the Nuclear export signal motif.

It belongs to the toroviruses nucleocapsid protein family.

The protein resides in the virion. It localises to the host nucleus. The protein localises to the host nucleoplasm. It is found in the host nucleolus. Functionally, major structural component of virions that associates with genomic RNA. The protein is Nucleoprotein (N) of Berne virus (BEV).